The primary structure comprises 413 residues: Aminopeptidase 2 (413 aa).

The a divalent metal cation site is built by glutamate 250, glutamate 316, glutamate 340, histidine 345, histidine 378, and aspartate 380.

It belongs to the peptidase M29 family. As to quaternary structure, homodimer. It depends on Co(2+) as a cofactor. Zn(2+) serves as cofactor. Mg(2+) is required as a cofactor.

Functionally, broad specificity metal-dependent exopeptidase, releasing all N-terminal amino acids. The protein is Aminopeptidase 2 of Geobacillus stearothermophilus (Bacillus stearothermophilus).